The following is a 132-amino-acid chain: Small ribosomal subunit protein uS9 (132 aa).

Positions 101 to 132 (KRAGLLTRDPRMKERKKPGLKAARRSPQFSKR) are disordered. Basic residues predominate over residues 113 to 132 (KERKKPGLKAARRSPQFSKR).

It belongs to the universal ribosomal protein uS9 family.

In Staphylococcus aureus (strain USA300), this protein is Small ribosomal subunit protein uS9.